The following is a 448-amino-acid chain: Ribosomal protein uS12 methylthiotransferase RimO (448 aa).

One can recognise an MTTase N-terminal domain in the interval 16–126 (PRISFVSLGC…VVAAVHEAVP (111 aa)). [4Fe-4S] cluster contacts are provided by Cys-25, Cys-61, Cys-90, Cys-157, Cys-161, and Cys-164. Residues 143–380 (LTPRHYAYLK…MEAQSHVSLR (238 aa)) form the Radical SAM core domain. The region spanning 383-448 (RAKVGKRLSV…DAYDLHGIAV (66 aa)) is the TRAM domain.

It belongs to the methylthiotransferase family. RimO subfamily. [4Fe-4S] cluster serves as cofactor.

It is found in the cytoplasm. The enzyme catalyses L-aspartate(89)-[ribosomal protein uS12]-hydrogen + (sulfur carrier)-SH + AH2 + 2 S-adenosyl-L-methionine = 3-methylsulfanyl-L-aspartate(89)-[ribosomal protein uS12]-hydrogen + (sulfur carrier)-H + 5'-deoxyadenosine + L-methionine + A + S-adenosyl-L-homocysteine + 2 H(+). Its function is as follows. Catalyzes the methylthiolation of an aspartic acid residue of ribosomal protein uS12. The chain is Ribosomal protein uS12 methylthiotransferase RimO from Methylorubrum extorquens (strain PA1) (Methylobacterium extorquens).